Here is a 1574-residue protein sequence, read N- to C-terminus: Pentafunctional AROM polypeptide (1574 aa).

A 3-dehydroquinate synthase region spans residues 1–384 (MSCSNNTEPT…HEPRATTVED (384 aa)). Residues 49–51 (DTN), 85–88 (EISK), 116–118 (GGV), and Asp121 each bind NAD(+). Residue Arg132 participates in 7-phospho-2-dehydro-3-deoxy-D-arabino-heptonate binding. 141-142 (TT) serves as a coordination point for NAD(+). Residues Asp148 and Lys154 each coordinate 7-phospho-2-dehydro-3-deoxy-D-arabino-heptonate. Lys163 contributes to the NAD(+) binding site. Asn164 provides a ligand contact to 7-phospho-2-dehydro-3-deoxy-D-arabino-heptonate. NAD(+) is bound by residues 181–184 (FLET) and Asn192. A Zn(2+)-binding site is contributed by Glu196. 7-phospho-2-dehydro-3-deoxy-D-arabino-heptonate contacts are provided by residues 196–199 (EVIK) and Lys250. Residue Glu260 is the Proton acceptor; for 3-dehydroquinate synthase activity of the active site. 7-phospho-2-dehydro-3-deoxy-D-arabino-heptonate is bound by residues 264 to 268 (RNLLN) and His271. A Zn(2+)-binding site is contributed by His271. Catalysis depends on His275, which acts as the Proton acceptor; for 3-dehydroquinate synthase activity. 7-phospho-2-dehydro-3-deoxy-D-arabino-heptonate-binding residues include His287 and Lys356. His287 contacts Zn(2+). The EPSP synthase stretch occupies residues 397–837 (ITPGVSTKLA…WDTLSQSFGL (441 aa)). The active-site For EPSP synthase activity is the Cys819. Residues 858–1052 (TRSVFIVGMR…TAKEQSFFVS (195 aa)) are shikimate kinase. 865 to 872 (GMRGAGKT) is an ATP binding site. The tract at residues 1053-1266 (LTVPSVDSAV…AAPGQLSAAE (214 aa)) is 3-dehydroquinase. Residue His1169 is the Proton acceptor; for 3-dehydroquinate dehydratase activity of the active site. Lys1197 serves as the catalytic Schiff-base intermediate with substrate; for 3-dehydroquinate dehydratase activity. The interval 1279–1574 (AQSFHLFGKP…NGDEIPTSTD (296 aa)) is shikimate dehydrogenase.

The protein in the N-terminal section; belongs to the sugar phosphate cyclases superfamily. Dehydroquinate synthase family. This sequence in the 2nd section; belongs to the EPSP synthase family. It in the 3rd section; belongs to the shikimate kinase family. In the 4th section; belongs to the type-I 3-dehydroquinase family. The protein in the C-terminal section; belongs to the shikimate dehydrogenase family. Homodimer. It depends on Zn(2+) as a cofactor.

It is found in the cytoplasm. It carries out the reaction 7-phospho-2-dehydro-3-deoxy-D-arabino-heptonate = 3-dehydroquinate + phosphate. It catalyses the reaction 3-dehydroquinate = 3-dehydroshikimate + H2O. The enzyme catalyses shikimate + NADP(+) = 3-dehydroshikimate + NADPH + H(+). The catalysed reaction is shikimate + ATP = 3-phosphoshikimate + ADP + H(+). It carries out the reaction 3-phosphoshikimate + phosphoenolpyruvate = 5-O-(1-carboxyvinyl)-3-phosphoshikimate + phosphate. It participates in metabolic intermediate biosynthesis; chorismate biosynthesis; chorismate from D-erythrose 4-phosphate and phosphoenolpyruvate: step 2/7. The protein operates within metabolic intermediate biosynthesis; chorismate biosynthesis; chorismate from D-erythrose 4-phosphate and phosphoenolpyruvate: step 3/7. Its pathway is metabolic intermediate biosynthesis; chorismate biosynthesis; chorismate from D-erythrose 4-phosphate and phosphoenolpyruvate: step 4/7. It functions in the pathway metabolic intermediate biosynthesis; chorismate biosynthesis; chorismate from D-erythrose 4-phosphate and phosphoenolpyruvate: step 5/7. It participates in metabolic intermediate biosynthesis; chorismate biosynthesis; chorismate from D-erythrose 4-phosphate and phosphoenolpyruvate: step 6/7. The AROM polypeptide catalyzes 5 consecutive enzymatic reactions in prechorismate polyaromatic amino acid biosynthesis. In Verticillium alfalfae (strain VaMs.102 / ATCC MYA-4576 / FGSC 10136) (Verticillium wilt of alfalfa), this protein is Pentafunctional AROM polypeptide.